Consider the following 245-residue polypeptide: 1-(5-phosphoribosyl)-5-[(5-phosphoribosylamino)methylideneamino] imidazole-4-carboxamide isomerase (245 aa).

D7 (proton acceptor) is an active-site residue. The Proton donor role is filled by D129.

It belongs to the HisA/HisF family.

It is found in the cytoplasm. It carries out the reaction 1-(5-phospho-beta-D-ribosyl)-5-[(5-phospho-beta-D-ribosylamino)methylideneamino]imidazole-4-carboxamide = 5-[(5-phospho-1-deoxy-D-ribulos-1-ylimino)methylamino]-1-(5-phospho-beta-D-ribosyl)imidazole-4-carboxamide. The protein operates within amino-acid biosynthesis; L-histidine biosynthesis; L-histidine from 5-phospho-alpha-D-ribose 1-diphosphate: step 4/9. This chain is 1-(5-phosphoribosyl)-5-[(5-phosphoribosylamino)methylideneamino] imidazole-4-carboxamide isomerase, found in Escherichia coli O17:K52:H18 (strain UMN026 / ExPEC).